A 273-amino-acid chain; its full sequence is uncharacterized protein (273 aa).

Residues 1–21 form the signal peptide; sequence MKILRWLFALVMLIATTEAMA.

This sequence to S.typhimurium YadU.

In terms of biological role, part of the yfcOPQRSUV fimbrial operon. Could contribute to adhesion to various surfaces in specific environmental niches. Increases adhesion to eukaryotic T24 bladder epithelial cells in the absence of fim genes. This is an uncharacterized protein from Escherichia coli (strain K12).